A 363-amino-acid chain; its full sequence is MDRRFLFALFLFAAVATAVTDDTNNDDFIIRQVVDNEEDHLLNAEHHFTSFKSKFSKSYATKEEHDYRFGVFKSNLIKAKLHQNRDPTAEHGITKFSDLTASEFRRQFLGLKKRLRLPAHAQKAPILPTTNLPEDFDWREKGAVTPVKDQGSCGSCWAFSTTGALEGAHYLATGKLVSLSEQQLVDCDHVCDPEQAGSCDSGCNGGLMNNAFEYLLESGGVVQEKDYAYTGRDGSCKFDKSKVVASVSNFSVVTLDEDQIAANLVKNGPLAVAINAAWMQTYMSGVSCPYVCAKSRLDHGVLLVGFGKGAYAPIRLKEKPYWIIKNSWGQNWGEQGYYKICRGRNVCGVDSMVSTVAAAQSNH.

The first 18 residues, 1 to 18, serve as a signal peptide directing secretion; the sequence is MDRRFLFALFLFAAVATA. A propeptide spans 19–131 (activation peptide); the sequence is VTDDTNNDDF…QKAPILPTTN (113 aa). 2 disulfides stabilise this stretch: cysteine 153/cysteine 203 and cysteine 187/cysteine 236. The active site involves cysteine 156. Residue asparagine 249 is glycosylated (N-linked (GlcNAc...) asparagine). A disulfide bond links cysteine 292 and cysteine 347. Active-site residues include histidine 299 and asparagine 326.

It belongs to the peptidase C1 family.

The sequence is that of Cysteine proteinase 15A from Pisum sativum (Garden pea).